The sequence spans 149 residues: Probable conjugal transfer protein TrbE part 1 (149 aa).

This sequence belongs to the TrbE/VirB4 family.

In Sinorhizobium fredii (strain NBRC 101917 / NGR234), this protein is Probable conjugal transfer protein TrbE part 1 (trbEA).